The following is a 91-amino-acid chain: Bacterial microcompartment shell vertex protein PduN (91 aa).

A BMV domain is found at 1-87 (MHLARVTGAV…IDLAVVGIVD (87 aa)).

Belongs to the CcmL/EutN family. In terms of assembly, homopentamer. Interacts with shell protein PduA.

It localises to the bacterial microcompartment. It participates in polyol metabolism; 1,2-propanediol degradation. Functionally, probably forms vertices in the shell of the bacterial microcompartment (BMC) dedicated to 1,2-propanediol (1,2-PD) degradation. Required for structural integrity of BMCs and to mitigate propionaldehyde toxicity. Its function is as follows. The 1,2-PD-specific bacterial microcompartment (BMC) concentrates low levels of 1,2-PD catabolic enzymes, concentrates volatile reaction intermediates thus enhancing pathway flux and keeps the level of toxic, mutagenic propionaldehyde low. The chain is Bacterial microcompartment shell vertex protein PduN from Salmonella typhimurium (strain LT2 / SGSC1412 / ATCC 700720).